Here is a 744-residue protein sequence, read N- to C-terminus: MQAVVPLNKMTAISPEPQTLASTEQNEVPRVVTSGEQEAILRGNAADAESFRQRFRWFCYSEVAGPRKALSQLWELCNQWLRPDIHTKEQILELLVFEQFLTILPGEIRIWVKSQHPESSEEVVTLIEDLTQMLEEKDPVSQDSTVSQEENSKEDKMVTVCPNTESCESITLKDVAVNFSRGEWKKLEPFQKELYKEVLLENLRNLEFLDFPVSKLELISQLKWVELPWLLEEVSKSSRLDESALDKIIERCLRDDDHGLMEESQQYCGSSEEDHGNQGNSKGRVAQNKTLGSGSRGKKFDPDKSPFGHNFKETSDLIKHLRVYLRKKSRRYNESKKPFSFHSDLVLNRKEKTAGEKSRKSNDGGKVLSHSSALTEHQKRQKIHLGDRSQKCSKCGIIFIRRSTLSRRKTPMCEKCRKDSCQEAALNKDEGNESGEKTHKCSKCGKAFGYSASLTKHRRIHTGEKPYMCNECGKAFSDSSSLTPHHRTHSGEKPFKCDDCGKGFTLSAHLIKHQRIHTGEKPYKCKDCGRPFSDSSSLIQHQRIHTGEKPYTCSNCGKSFSHSSSLSKHQRIHTGEKPYKCGECGKAFRQNSCLTRHQRIHTGEKPYLCNDCGMTFSHFTSVIYHQRLHSGEKPYKCNQCEKAFPTHSLLSRHQRIHTGVKPYKCKECGKSFSQSSSLNEHHRIHTGEKPYECNYCGATFSRSSILVEHLKIHTGRREYECNECEKTFKSNSGLIRHRGFHSAE.

In terms of domain architecture, SCAN box spans 52–134; that stretch reads RQRFRWFCYS…TLIEDLTQML (83 aa). Residues 137 to 156 form a disordered region; the sequence is KDPVSQDSTVSQEENSKEDK. The KRAB domain occupies 170–241; sequence ITLKDVAVNF…EEVSKSSRLD (72 aa). Disordered stretches follow at residues 263 to 308 and 350 to 385; these read ESQQ…SPFG and KEKT…KIHL. The segment covering 277 to 293 has biased composition (polar residues); the sequence is NQGNSKGRVAQNKTLGS. 2 stretches are compositionally biased toward basic and acidic residues: residues 298 to 308 and 350 to 363; these read KKFDPDKSPFG and KEKT…KSND. 11 consecutive C2H2-type zinc fingers follow at residues 439–461, 467–489, 495–517, 523–545, 551–573, 579–601, 607–629, 635–657, 663–685, 691–713, and 719–741; these read HKCS…RRIH, YMCN…HRTH, FKCD…QRIH, YKCK…QRIH, YTCS…QRIH, YKCG…QRIH, YLCN…QRLH, YKCN…QRIH, YKCK…HRIH, YECN…LKIH, and YECN…RGFH.

It belongs to the krueppel C2H2-type zinc-finger protein family.

It is found in the nucleus. May be involved in transcriptional regulation. The protein is Zinc finger protein 483 (ZNF483) of Homo sapiens (Human).